The primary structure comprises 485 residues: Putative E3 ubiquitin-protein ligase makorin-4 (485 aa).

The span at 1-32 (MAEAAAPGTTVTTSGAGAAAAEAAETAEAVSP) shows a compositional bias: low complexity. The disordered stretch occupies residues 1 to 63 (MAEAAAPGTT…GSDGSGGRGD (63 aa)). The segment covering 45–63 (AGGGVGGSDGSDGSGGRGD) has biased composition (gly residues). 3 consecutive C3H1-type zinc fingers follow at residues 90–117 (WTKQVTCRYFKYGICKEGDNCRYSHDLS), 124–146 (VCKYFQRGCCVYGDRCRCEHSKP), and 243–270 (ETKKQLCPYAAVGQCRYGENCVYLHGDL). The segment at 271-298 (CDMCGLQVLHPMDAAQRSQHIQACIEAH) is makorin-type Cys-His. The RING-type zinc-finger motif lies at 316-370 (CGICMEVVYEKANPNEHRFGILSNCNHTFCLKCIRKWRSAKEFESRIVKSCPQCR). The C3H1-type 4 zinc-finger motif lies at 399–428 (AMSNKACKYFDEGRGSCPFGENCFYKHMYP).

The enzyme catalyses S-ubiquitinyl-[E2 ubiquitin-conjugating enzyme]-L-cysteine + [acceptor protein]-L-lysine = [E2 ubiquitin-conjugating enzyme]-L-cysteine + N(6)-ubiquitinyl-[acceptor protein]-L-lysine.. The protein operates within protein modification; protein ubiquitination. Functionally, may act as a E3 ubiquitin ligase catalyzing the covalent attachment of ubiquitin moieties onto substrate proteins. The protein is Putative E3 ubiquitin-protein ligase makorin-4 (MKRN4P) of Homo sapiens (Human).